The primary structure comprises 711 residues: MLNPIVRKFQYGQHTVTLETGMMARQATAAVMVSMDDTAVFVTVVGQKKAKPGQDFFPLTVNYQERTYAAGRIPGSFFRREGRPSEGETLIARLIDRPIRPLFPEGFVNEVQVIATVVSVNPQVNPDIVAMIGASAALSLSGIPFNGPIGAARVGYINDQYVLNPTQDELKESKLDLVVAGTEAAVLMVESEAELLSEDQMLGAVVFGHEQQQVVIQNINELVKEAGKPRWDWQPEPVNEALNARVAALAEARLSDAYRITDKQERYAQVDVIKSETIATLLAEDETLDENELGEILHAIEKNVVRSRVLAGEPRIDGREKDMIRGLDVRTGVLPRTHGSALFTRGETQALVTATLGTARDAQVLDELMGERTDTFLFHYNFPPYSVGETGIVGSPKRREIGHGRLAKRGVLAVMPDMDKFPYTVRVVSEITESNGSSSMASVCGASLALMDAGVPIKAAVAGIAMGLVKEGDNYVVLSDILGDEDHLGDMDFKVAGSRDGISALQMDIKIEGITKEIMQVALNQAKGARLHILGVMEQAINAPRGDISEFAPRIHTIKINPDKIKDVIGKGGSVIRALTEETGTTIEIEDDGTVKIAATDGEKAKHAIRRIEEITAEIEVGRVYTGKVTRIVDFGAFVAIGGGKEGLVHISQIADKRVEKVTDYLLMGQEVPVKVLEVDRQGRIRLSIKEATEQSQPAAAPEAPAAEQGE.

Positions 486 and 492 each coordinate Mg(2+). One can recognise a KH domain in the interval proline 553 to isoleucine 612. In terms of domain architecture, S1 motif spans glycine 622–lysine 690. The tract at residues lysine 690–glutamate 711 is disordered. Positions glutamate 694–glutamate 711 are enriched in low complexity.

It belongs to the polyribonucleotide nucleotidyltransferase family. Component of the RNA degradosome, which is a multiprotein complex involved in RNA processing and mRNA degradation. Mg(2+) is required as a cofactor.

It is found in the cytoplasm. It catalyses the reaction RNA(n+1) + phosphate = RNA(n) + a ribonucleoside 5'-diphosphate. Its function is as follows. Involved in mRNA degradation. Catalyzes the phosphorolysis of single-stranded polyribonucleotides processively in the 3'- to 5'-direction. This is Polyribonucleotide nucleotidyltransferase from Shigella dysenteriae serotype 1 (strain Sd197).